The chain runs to 492 residues: MTDLHHLSVHELADGLKNKQFSSHELVEHFANRINRLDGQINSFITKDFDNALAQAKLADKLRAKGDNRPLLGVPMAHKDNLCTKGVLTTAGSKMLYNFVSPYDATVVDSIANSGFVSLGKLNMDEFAMGSDNESSYFGAVHNPWDVQRVPGGSSGGSAAAVAAGFVPVATGSDTGGSIRQPASFCGITGIKPTYGRVSRYGMIAYASSLDQAGTFGKSALDCAYLLAPMAGYDPKDATSINRPSEDYVADILATKTDGKPLAGKKIGVAKAYFGAGLDSEVEKSIRTALAKYEELGAKIVEVDITDPAITLATYYLLAPAEASSNLSRYDGVRFGYRCENPKDLHDLYTRSRSEGFGAEVQRRIIMGTYALSAGYFDAYYTKAQKVRRLIVDDFKKAFEKCDIIASPTAPTPAYKLGESLDPASIYLLDVYTIGVNLAGLPALSHPVGQANGLPVGLQLISKHWAESELLKTAHIYQSHTDFHQAKADLVK.

Catalysis depends on charge relay system residues lysine 79 and serine 154. The active-site Acyl-ester intermediate is the serine 178.

Belongs to the amidase family. GatA subfamily. Heterotrimer of A, B and C subunits.

It carries out the reaction L-glutamyl-tRNA(Gln) + L-glutamine + ATP + H2O = L-glutaminyl-tRNA(Gln) + L-glutamate + ADP + phosphate + H(+). In terms of biological role, allows the formation of correctly charged Gln-tRNA(Gln) through the transamidation of misacylated Glu-tRNA(Gln) in organisms which lack glutaminyl-tRNA synthetase. The reaction takes place in the presence of glutamine and ATP through an activated gamma-phospho-Glu-tRNA(Gln). The polypeptide is Glutamyl-tRNA(Gln) amidotransferase subunit A (gatA) (Moraxella catarrhalis (Branhamella catarrhalis)).